We begin with the raw amino-acid sequence, 430 residues long: 3-deoxy-D-manno-octulosonic acid transferase (430 aa).

A helical; Signal-anchor transmembrane segment spans residues 12–32 (AFLVAAFLAAAPRIFYKVVFH). The Proton acceptor role is filled by Glu-66. Residues 274–275 (PR), 314–316 (MGI), and 341–344 (NLLE) each bind CMP.

It belongs to the glycosyltransferase group 1 family. Glycosyltransferase 30 subfamily.

It localises to the cell inner membrane. It catalyses the reaction lipid IVA (E. coli) + CMP-3-deoxy-beta-D-manno-octulosonate = alpha-Kdo-(2-&gt;6)-lipid IVA (E. coli) + CMP + H(+). It carries out the reaction alpha-Kdo-(2-&gt;6)-lipid IVA (E. coli) + CMP-3-deoxy-beta-D-manno-octulosonate = alpha-Kdo-(2-&gt;4)-alpha-Kdo-(2-&gt;6)-lipid IVA (E. coli) + CMP + H(+). The enzyme catalyses alpha-Kdo-(2-&gt;4)-alpha-Kdo-(2-&gt;6)-lipid IVA (E. coli) + CMP-3-deoxy-beta-D-manno-octulosonate = alpha-Kdo-(2-&gt;8)-alpha-Kdo-(2-&gt;4)-alpha-Kdo-(2-&gt;6)-lipid IVA (E. coli) + CMP + H(+). It participates in bacterial outer membrane biogenesis; LPS core biosynthesis. Functionally, involved in lipopolysaccharide (LPS) biosynthesis. Catalyzes the transfer of three 3-deoxy-D-manno-octulosonate (Kdo) residues from CMP-Kdo to lipid IV(A), the tetraacyldisaccharide-1,4'-bisphosphate precursor of lipid A. Thus generates the genus-specific LPS epitope of Chlamydia, composed of the trisaccharide alpha-Kdo-(2-&gt;8)-alpha-Kdo-(2-&gt;4)-alpha-Kdo. The chain is 3-deoxy-D-manno-octulosonic acid transferase (waaA) from Chlamydia muridarum (strain MoPn / Nigg).